The primary structure comprises 261 residues: uncharacterized protein (261 aa).

Positions 1 to 22 are cleaved as a signal peptide; sequence MKSIKRIGLCISLLILIIFVTS. C23 is lipidated: N-palmitoyl cysteine. C23 carries the S-diacylglycerol cysteine lipid modification.

It belongs to the staphylococcal tandem lipoprotein family.

It localises to the cell membrane. This is an uncharacterized protein from Staphylococcus aureus (strain USA300).